The chain runs to 315 residues: L-lactate dehydrogenase (315 aa).

NAD(+) contacts are provided by residues V14, D35, Y67, and 81-82 (GV). Substrate is bound by residues Q84, R91, and 123-126 (NPVD). Residues 121–123 (ASN) and S146 contribute to the NAD(+) site. Substrate is bound at residue 151 to 154 (DSAR). Catalysis depends on H178, which acts as the Proton acceptor. A Phosphotyrosine modification is found at Y219. T228 contacts substrate.

It belongs to the LDH/MDH superfamily. LDH family. In terms of assembly, homotetramer.

It is found in the cytoplasm. It carries out the reaction (S)-lactate + NAD(+) = pyruvate + NADH + H(+). It functions in the pathway fermentation; pyruvate fermentation to lactate; (S)-lactate from pyruvate: step 1/1. Catalyzes the conversion of lactate to pyruvate. In Malacoplasma penetrans (strain HF-2) (Mycoplasma penetrans), this protein is L-lactate dehydrogenase.